The chain runs to 565 residues: Liver carboxylesterase 1 (565 aa).

The N-terminal stretch at 1–18 (MWLCALSLISLTACLSLG) is a signal peptide. An intrachain disulfide couples cysteine 87 to cysteine 116. Serine 221 serves as the catalytic Acyl-ester intermediate. A disulfide bond links cysteine 273 and cysteine 284. Glutamate 353 (charge relay system) is an active-site residue. Residue serine 378 is modified to Phosphoserine. A glycan (N-linked (GlcNAc...) asparagine) is linked at asparagine 388. The Charge relay system role is filled by histidine 466. Asparagine 489 carries N-linked (GlcNAc...) asparagine glycosylation.

This sequence belongs to the type-B carboxylesterase/lipase family. In terms of assembly, homotrimer and homohexamer. Binds to beta-glucuronidase. In terms of tissue distribution, detected in kidney, liver and lung.

The protein localises to the endoplasmic reticulum lumen. It localises to the cytoplasm. Its subcellular location is the lipid droplet. The catalysed reaction is a carboxylic ester + H2O = an alcohol + a carboxylate + H(+). The enzyme catalyses cholesteryl (9Z-octadecenoate) + H2O = cholesterol + (9Z)-octadecenoate + H(+). It carries out the reaction 2-(5Z,8Z,11Z,14Z-eicosatetraenoyl)-glycerol + H2O = glycerol + (5Z,8Z,11Z,14Z)-eicosatetraenoate + H(+). It catalyses the reaction prostaglandin E2 1-glyceryl ester + H2O = prostaglandin E2 + glycerol + H(+). The catalysed reaction is a cholesterol ester + H2O = cholesterol + a fatty acid + H(+). The enzyme catalyses prostaglandin F2alpha 1-glyceryl ester + H2O = prostaglandin F2alpha + glycerol + H(+). Functionally, involved in the detoxification of xenobiotics and in the activation of ester and amide prodrugs. Hydrolyzes aromatic and aliphatic esters, but has no catalytic activity toward amides or a fatty acyl-CoA ester. Displays fatty acid ethyl ester synthase activity, catalyzing the ethyl esterification of oleic acid to ethyloleate. Converts monoacylglycerides to free fatty acids and glycerol. Hydrolyzes of 2-arachidonoylglycerol and prostaglandins. Hydrolyzes cellular cholesteryl esters to free cholesterols and promotes reverse cholesterol transport (RCT) by facilitating both the initial and final steps in the process. First of all, allows free cholesterol efflux from macrophages to extracellular cholesterol acceptors and secondly, releases free cholesterol from lipoprotein-delivered cholesteryl esters in the liver for bile acid synthesis or direct secretion into the bile. The chain is Liver carboxylesterase 1 from Mus musculus (Mouse).